We begin with the raw amino-acid sequence, 466 residues long: 5-hydroxytryptamine receptor (466 aa).

A disordered region spans residues 1 to 21 (MNASRLPGFNDTSQDQPYPTS). The Extracellular segment spans residues 1–66 (MNASRLPGFN…TSFVLMAVTS (66 aa)). Residues Asn-2, Asn-10, Asn-29, Asn-41, Asn-45, and Asn-50 are each glycosylated (N-linked (GlcNAc...) asparagine). The span at 10–21 (NDTSQDQPYPTS) shows a compositional bias: polar residues. A helical transmembrane segment spans residues 67 to 89 (VVLALIILATIVGNVFVIAAIII). Topologically, residues 90 to 99 (ERNLQNVANY) are cytoplasmic. The helical transmembrane segment at 100-121 (LVASLAVADLMVACLVMPLGAV) threads the bilayer. The Extracellular segment spans residues 122–136 (YEVSQGWILGPELCD). The cysteines at positions 135 and 215 are disulfide-linked. Residues 137–158 (MWTSSDVLCSSASILHLVAIAT) traverse the membrane as a helical segment. At 159–177 (DRYWAVTDVDYIHIRNEKR) the chain is on the cytoplasmic side. A helical membrane pass occupies residues 178-200 (IFTMIVLVWGAALVVSLAPQLGW). Topologically, residues 201–228 (KDPDYLARITQQQKCLVSQDLAYQIFAT) are extracellular. The chain crosses the membrane as a helical span at residues 229–250 (MSTFYVPLAVILILYWKIFQTA). Residues 251–386 (RRRIRRRRDP…AKRERKAAKT (136 aa)) lie on the Cytoplasmic side of the membrane. Disordered regions lie at residues 255-282 (RRRRDPPPPRPTSADGATPSGRPVQSAR) and 339-360 (VPPSVSPEKSSSTVTNGSKPER). Residues 339–353 (VPPSVSPEKSSSTVT) are compositionally biased toward low complexity. Residues 387–410 (LAIITGAFVFCWLPFFIMALVMPI) form a helical membrane-spanning segment. Topologically, residues 411 to 419 (CQTCVISDY) are extracellular. The helical transmembrane segment at 420–442 (LASFFLWLGYFNSTLNPVIYTIF) threads the bilayer. Over 443–466 (SPDFRQAFARILFGTHRRRRYKKF) the chain is Cytoplasmic.

The protein belongs to the G-protein coupled receptor 1 family.

It localises to the cell membrane. In terms of biological role, this is a receptor for 5-hydroxytryptamine (serotonin), a biogenic hormone that function as a neurotransmitter, a hormone, and a mitogen. This Heliothis virescens (Tobacco budworm moth) protein is 5-hydroxytryptamine receptor.